We begin with the raw amino-acid sequence, 609 residues long: Kelch domain-containing protein 10 homolog (609 aa).

The tract at residues A103–E146 is disordered. A compositionally biased stretch (acidic residues) spans S104–S137. 6 Kelch repeats span residues H214–N277, L279–H334, F335–H381, H389–G437, E458–N508, and C510–N554. The interval L576–Q609 is disordered.

As to quaternary structure, interacts with Elongin-C; may be the substrate recognition component of an E3 ubiquitin ligase complex.

Its function is as follows. Activates the Pk92B/DASK1-MAPK signaling cascade. This is Kelch domain-containing protein 10 homolog (slim) from Drosophila melanogaster (Fruit fly).